The primary structure comprises 289 residues: Acetyl-coenzyme A carboxylase carboxyl transferase subunit beta (289 aa).

The CoA carboxyltransferase N-terminal domain maps to V28 to N289. Zn(2+) is bound by residues C32, C35, C51, and C54. Residues C32 to C54 form a C4-type zinc finger.

The protein belongs to the AccD/PCCB family. As to quaternary structure, acetyl-CoA carboxylase is a heterohexamer composed of biotin carboxyl carrier protein (AccB), biotin carboxylase (AccC) and two subunits each of ACCase subunit alpha (AccA) and ACCase subunit beta (AccD). Zn(2+) serves as cofactor.

It localises to the cytoplasm. It carries out the reaction N(6)-carboxybiotinyl-L-lysyl-[protein] + acetyl-CoA = N(6)-biotinyl-L-lysyl-[protein] + malonyl-CoA. The protein operates within lipid metabolism; malonyl-CoA biosynthesis; malonyl-CoA from acetyl-CoA: step 1/1. Functionally, component of the acetyl coenzyme A carboxylase (ACC) complex. Biotin carboxylase (BC) catalyzes the carboxylation of biotin on its carrier protein (BCCP) and then the CO(2) group is transferred by the transcarboxylase to acetyl-CoA to form malonyl-CoA. The protein is Acetyl-coenzyme A carboxylase carboxyl transferase subunit beta of Bacillus cytotoxicus (strain DSM 22905 / CIP 110041 / 391-98 / NVH 391-98).